The following is a 228-amino-acid chain: Ribosomal RNA small subunit methyltransferase G (228 aa).

S-adenosyl-L-methionine contacts are provided by residues glycine 92, phenylalanine 97, 115-117 (EAT), 143-144 (AE), and arginine 156.

Belongs to the methyltransferase superfamily. RNA methyltransferase RsmG family.

The protein resides in the cytoplasm. Specifically methylates the N7 position of a guanine in 16S rRNA. This is Ribosomal RNA small subunit methyltransferase G from Thermosynechococcus vestitus (strain NIES-2133 / IAM M-273 / BP-1).